Reading from the N-terminus, the 654-residue chain is Probable replication restart protein PriA (654 aa).

Cys367, Cys370, Cys376, Cys379, Cys395, Cys398, Cys407, and Cys410 together coordinate Zn(2+).

This sequence belongs to the helicase family. PriA subfamily. As to quaternary structure, component of the replication restart primosome. Zn(2+) is required as a cofactor.

Initiates the restart of stalled replication forks, which reloads the replicative helicase on sites other than the origin of replication. Recognizes and binds to abandoned replication forks and remodels them to uncover a helicase loading site. Promotes assembly of the primosome at these replication forks. In Mycobacterium tuberculosis (strain CDC 1551 / Oshkosh), this protein is Probable replication restart protein PriA.